Consider the following 367-residue polypeptide: Peptide chain release factor 2 (367 aa).

Position 254 is an N5-methylglutamine (Gln254).

This sequence belongs to the prokaryotic/mitochondrial release factor family. Post-translationally, methylated by PrmC. Methylation increases the termination efficiency of RF2.

The protein resides in the cytoplasm. In terms of biological role, peptide chain release factor 2 directs the termination of translation in response to the peptide chain termination codons UGA and UAA. This chain is Peptide chain release factor 2, found in Burkholderia mallei (strain ATCC 23344).